An 814-amino-acid chain; its full sequence is G-type lectin S-receptor-like serine/threonine-protein kinase At1g61400 (814 aa).

Residues 1–34 form the signal peptide; the sequence is MDFLFLLLERKNKHMGKKRVVLLWLSIFISFSSA. The region spanning 35–154 is the Bulb-type lectin domain; that stretch reads EITEESPLSI…VSGRTLWESF (120 aa). Residues 35–436 lie on the Extracellular side of the membrane; the sequence is EITEESPLSI…ELDVNKRKKT (402 aa). N-linked (GlcNAc...) asparagine glycosylation is found at asparagine 63, asparagine 104, asparagine 127, and asparagine 246. The EGF-like; atypical domain maps to 288–324; the sequence is PANSCDIYGVCGPFGFCVISVPPKCKCFKGFIPKSIE. 2 cysteine pairs are disulfide-bonded: cysteine 292/cysteine 304 and cysteine 298/cysteine 312. Residues asparagine 330, asparagine 346, and asparagine 385 are each glycosylated (N-linked (GlcNAc...) asparagine). Residues 343 to 425 form the PAN domain; the sequence is CQGNSTGKDA…GELLSIRLAR (83 aa). 2 disulfides stabilise this stretch: cysteine 378–cysteine 399 and cysteine 382–cysteine 388. The chain crosses the membrane as a helical span at residues 437 to 457; that stretch reads IIAITVSLTLFVILGFTAFGF. Residues 458–814 are Cytoplasmic-facing; that stretch reads WRRRVEQNAL…EMTESVIHGR (357 aa). The region spanning 500–785 is the Protein kinase domain; sequence FSLSNKLGHG…DLPLPKQPTF (286 aa). Residues 506 to 514 and lysine 528 each bind ATP; that span reads LGHGGFGSV. Residues serine 534 and serine 549 each carry the phosphoserine modification. The interval 589–606 is caM-binding; it reads KKRLEIDWPKRFDIIQGI. The active-site Proton acceptor is the aspartate 625. A phosphoserine mark is found at serine 629 and serine 642. At threonine 659 the chain carries Phosphothreonine. 2 positions are modified to phosphoserine: serine 702 and serine 796.

The protein belongs to the protein kinase superfamily. Ser/Thr protein kinase family.

It localises to the cell membrane. It catalyses the reaction L-seryl-[protein] + ATP = O-phospho-L-seryl-[protein] + ADP + H(+). It carries out the reaction L-threonyl-[protein] + ATP = O-phospho-L-threonyl-[protein] + ADP + H(+). This chain is G-type lectin S-receptor-like serine/threonine-protein kinase At1g61400, found in Arabidopsis thaliana (Mouse-ear cress).